The primary structure comprises 230 residues: Metaxin-2 homolog (230 aa).

This sequence belongs to the metaxin family. Associates with the mitochondrial contact site and cristae organizing system (MICOS) complex (also known as MINOS or MitOS complex).

Its subcellular location is the mitochondrion outer membrane. Functionally, involved in transport of proteins into the mitochondrion. The polypeptide is Metaxin-2 homolog (mtx-2) (Caenorhabditis elegans).